A 38-amino-acid chain; its full sequence is Large ribosomal subunit protein bL36 (38 aa).

The protein belongs to the bacterial ribosomal protein bL36 family.

The sequence is that of Large ribosomal subunit protein bL36 from Buchnera aphidicola subsp. Schizaphis graminum (strain Sg).